A 199-amino-acid polypeptide reads, in one-letter code: COMM domain-containing protein 2 (199 aa).

Positions 123–190 (SYHSLEWRLD…QALEEMKTNH (68 aa)) constitute a COMM domain.

Belongs to the COMM domain-containing protein 2 family. As to quaternary structure, component of the commander complex consisting of the CCC subcomplex and the retriever subcomplex. Component of the CCC (COMMD/CCDC22/CCDC93) subcomplex consisting of COMMD1, COMMD2, COMMD3, COMMD4, COMMD5, COMMD6, COMMD7, COMMD8, COMMD9, COMMD10, CCDC22 and CCDC93; within the complex forms a heterodimer with COMMD3. Interacts with RELA, RELB, NFKB1/p105, NFKB2/p100. Interacts with CCDC22, CCDC93, SCNN1B, CUL3, CUL4B, CUL5, CUL7.

It localises to the cytoplasm. Its function is as follows. Scaffold protein in the commander complex that is essential for endosomal recycling of transmembrane cargos; the commander complex is composed of the CCC subcomplex and the retriever subcomplex. May modulate activity of cullin-RING E3 ubiquitin ligase (CRL) complexes. May down-regulate activation of NF-kappa-B. The protein is COMM domain-containing protein 2 (Commd2) of Mus musculus (Mouse).